Consider the following 181-residue polypeptide: Proteinase inhibitor B (181 aa).

Positions 1–24 are cleaved as a signal peptide; the sequence is MAASNALLLISGALLISLAVLCQG. 3 disulfides stabilise this stretch: cysteine 67/cysteine 113, cysteine 134/cysteine 143, and cysteine 136/cysteine 139.

This sequence belongs to the protease inhibitor I3 (leguminous Kunitz-type inhibitor) family.

The protein resides in the secreted. In terms of biological role, possesses two reactive sites. Inhibits two molecules of trypsin simultaneously. Inhibits efficiently kallikrein, but chymotrypsin weakly. The protein is Proteinase inhibitor B of Sagittaria sagittifolia (Arrowhead).